Consider the following 324-residue polypeptide: tRNA N6-adenosine threonylcarbamoyltransferase (324 aa).

Residues histidine 107, histidine 111, and tyrosine 128 each coordinate Fe cation. Substrate is bound by residues 128 to 132, aspartate 160, glycine 173, glutamate 177, and asparagine 256; that span reads YVSGG. Aspartate 284 contacts Fe cation.

It belongs to the KAE1 / TsaD family. In terms of assembly, monomer. Component of the KEOPS complex that consists of Kae1, Bud32, Cgi121 and Pcc1; the whole complex dimerizes. The cofactor is Fe(2+).

It is found in the cytoplasm. The enzyme catalyses L-threonylcarbamoyladenylate + adenosine(37) in tRNA = N(6)-L-threonylcarbamoyladenosine(37) in tRNA + AMP + H(+). Required for the formation of a threonylcarbamoyl group on adenosine at position 37 (t(6)A37) in tRNAs that read codons beginning with adenine. Is a component of the KEOPS complex that is probably involved in the transfer of the threonylcarbamoyl moiety of threonylcarbamoyl-AMP (TC-AMP) to the N6 group of A37. Kae1 likely plays a direct catalytic role in this reaction, but requires other protein(s) of the complex to fulfill this activity. This is tRNA N6-adenosine threonylcarbamoyltransferase from Methanothrix thermoacetophila (strain DSM 6194 / JCM 14653 / NBRC 101360 / PT) (Methanosaeta thermophila).